Reading from the N-terminus, the 355-residue chain is Lipoyl synthase (355 aa).

Residues 7–55 form the RPE1 insert domain; sequence HLSKFAYREEFAGNTEVLATAAYKEDCADASTGLTPKLPLEVEFGKMSK. [4Fe-4S] cluster is bound by residues C86, C91, C97, C112, C116, C119, and S325. Residues 98-314 enclose the Radical SAM core domain; sequence WSKKHATVMI…ERVARTKGFL (217 aa).

The protein belongs to the radical SAM superfamily. Lipoyl synthase family. It depends on [4Fe-4S] cluster as a cofactor.

The protein resides in the cytoplasm. The enzyme catalyses [[Fe-S] cluster scaffold protein carrying a second [4Fe-4S](2+) cluster] + N(6)-octanoyl-L-lysyl-[protein] + 2 oxidized [2Fe-2S]-[ferredoxin] + 2 S-adenosyl-L-methionine + 4 H(+) = [[Fe-S] cluster scaffold protein] + N(6)-[(R)-dihydrolipoyl]-L-lysyl-[protein] + 4 Fe(3+) + 2 hydrogen sulfide + 2 5'-deoxyadenosine + 2 L-methionine + 2 reduced [2Fe-2S]-[ferredoxin]. Its pathway is protein modification; protein lipoylation via endogenous pathway; protein N(6)-(lipoyl)lysine from octanoyl-[acyl-carrier-protein]: step 2/2. Catalyzes the radical-mediated insertion of two sulfur atoms into the C-6 and C-8 positions of the octanoyl moiety bound to the lipoyl domains of lipoate-dependent enzymes, thereby converting the octanoylated domains into lipoylated derivatives. The protein is Lipoyl synthase of Rickettsia bellii (strain RML369-C).